The following is a 340-amino-acid chain: Replication factor C subunit 2 (340 aa).

Residue 59-66 (GSPGTGKT) coordinates ATP.

Belongs to the activator 1 small subunits family. In terms of assembly, heteropentamer of subunits rfc1, rfc2, rfc3, rfc4 and rfc5 that forms a complex (RFC) with PCNA in the presence of ATP. Two other complexes exist where rfc1 can be replaced by either ctf18 or elg1 to form the ctf18-RFC or the elg1-RFC complexes respectively.

The protein resides in the nucleus. The elongation of primed DNA templates by DNA polymerase delta and epsilon requires the action of the accessory proteins PCNA and activator 1. Subunit 2 binds ATP and single-stranded DNA. The chain is Replication factor C subunit 2 (rfc2) from Schizosaccharomyces pombe (strain 972 / ATCC 24843) (Fission yeast).